Consider the following 189-residue polypeptide: Flavin prenyltransferase UbiX (189 aa).

FMN contacts are provided by residues glycine 10 to serine 12, serine 37, serine 88 to threonine 91, and arginine 123. Dimethylallyl phosphate-binding residues include tyrosine 153 and arginine 169.

This sequence belongs to the UbiX/PAD1 family.

The enzyme catalyses dimethylallyl phosphate + FMNH2 = prenylated FMNH2 + phosphate. Its pathway is cofactor biosynthesis; ubiquinone biosynthesis. Its function is as follows. Flavin prenyltransferase that catalyzes the synthesis of the prenylated FMN cofactor (prenyl-FMN) for 4-hydroxy-3-polyprenylbenzoic acid decarboxylase UbiD. The prenyltransferase is metal-independent and links a dimethylallyl moiety from dimethylallyl monophosphate (DMAP) to the flavin N5 and C6 atoms of FMN. The polypeptide is Flavin prenyltransferase UbiX (Salmonella typhi).